Consider the following 110-residue polypeptide: uncharacterized protein (110 aa).

A helical membrane pass occupies residues 88–108 (LTRICLLIFGIGLVVLIFLKL).

Its subcellular location is the membrane. This is an uncharacterized protein from Rickettsia prowazekii (strain Madrid E).